A 410-amino-acid chain; its full sequence is SPbeta prophage-derived uncharacterized protein YonV (410 aa).

The sequence is that of SPbeta prophage-derived uncharacterized protein YonV (yonV) from Bacillus subtilis (strain 168).